A 138-amino-acid polypeptide reads, in one-letter code: Basic phospholipase A2 B (138 aa).

The signal sequence occupies residues 1-16 (MRALWIVAVLLLGVEG). Cystine bridges form between cysteine 42–cysteine 131, cysteine 44–cysteine 60, cysteine 59–cysteine 111, cysteine 65–cysteine 138, cysteine 66–cysteine 104, cysteine 73–cysteine 97, and cysteine 91–cysteine 102. Ca(2+) is bound by residues tyrosine 43, glycine 45, and glycine 47. Histidine 63 is an active-site residue. Residue aspartate 64 coordinates Ca(2+). The active site involves aspartate 105.

The protein belongs to the phospholipase A2 family. Group II subfamily. D49 sub-subfamily. It depends on Ca(2+) as a cofactor. As to expression, expressed by the venom gland.

It is found in the secreted. It carries out the reaction a 1,2-diacyl-sn-glycero-3-phosphocholine + H2O = a 1-acyl-sn-glycero-3-phosphocholine + a fatty acid + H(+). Snake venom phospholipase A2 (PLA2) that shows potent hemolytic activity, and exhibits medium anticoagulant effects by binding to factor Xa (F10) and inhibiting the prothrombinase activity (IC(50) is 90 nM). It is one of the few phospholipases A2 capable of hydrolyzing the phospholipids of E.coli membranes in the presence of a bactericidal/permeability-increasing protein (BPI) of neutrophils. PLA2 catalyzes the calcium-dependent hydrolysis of the 2-acyl groups in 3-sn-phosphoglycerides. The protein is Basic phospholipase A2 B of Gloydius halys (Chinese water mocassin).